Here is a 290-residue protein sequence, read N- to C-terminus: 4-diphosphocytidyl-2-C-methyl-D-erythritol kinase (290 aa).

Residue Lys-12 is part of the active site. 97–107 (PVASGIGGGSA) contributes to the ATP binding site. The active site involves Asp-139.

Belongs to the GHMP kinase family. IspE subfamily.

It catalyses the reaction 4-CDP-2-C-methyl-D-erythritol + ATP = 4-CDP-2-C-methyl-D-erythritol 2-phosphate + ADP + H(+). It participates in isoprenoid biosynthesis; isopentenyl diphosphate biosynthesis via DXP pathway; isopentenyl diphosphate from 1-deoxy-D-xylulose 5-phosphate: step 3/6. Functionally, catalyzes the phosphorylation of the position 2 hydroxy group of 4-diphosphocytidyl-2C-methyl-D-erythritol. This chain is 4-diphosphocytidyl-2-C-methyl-D-erythritol kinase, found in Parvibaculum lavamentivorans (strain DS-1 / DSM 13023 / NCIMB 13966).